We begin with the raw amino-acid sequence, 424 residues long: Probable ribonuclease FAU-1 (424 aa).

Belongs to the FAU-1 family.

Functionally, probable RNase involved in rRNA stability through maturation and/or degradation of precursor rRNAs. Binds to RNA in loop regions with AU-rich sequences. The protein is Probable ribonuclease FAU-1 of Saccharolobus islandicus (strain M.16.27) (Sulfolobus islandicus).